A 272-amino-acid chain; its full sequence is MDTLAFINRALVEEGYSLKDIKLVLITDFEPSSVEAIRRLLAVNQGVSFIGRKYVKEVLEKFGLRNVRFRAVEEIPSLEFKLPESGTVKVLPFRNSPQEASAGYLLEEERILFSGKFLGSFGEKGDTIQIFHRVFFPCRNILDYNVGLLESIGEEFEVFPFYGEKQKLSAKTLKEYFNYTVKGSVLEREVILGLVNGVLLNLSDEERENLLSSIGYLAEVDDKVIVDFYTEPNLFYEEFVNTLPDAVKSKEEFYRIVEKLLEHNFYVPLRAV.

An HTH merR-type domain is found at 1 to 27 (MDTLAFINRALVEEGYSLKDIKLVLIT).

This is an uncharacterized protein from Aquifex aeolicus (strain VF5).